The sequence spans 71 residues: DNA-directed RNA polymerase subunit omega (71 aa).

Belongs to the RNA polymerase subunit omega family. As to quaternary structure, the RNAP catalytic core consists of 2 alpha, 1 beta, 1 beta' and 1 omega subunit. When a sigma factor is associated with the core the holoenzyme is formed, which can initiate transcription.

It catalyses the reaction RNA(n) + a ribonucleoside 5'-triphosphate = RNA(n+1) + diphosphate. In terms of biological role, promotes RNA polymerase assembly. Latches the N- and C-terminal regions of the beta' subunit thereby facilitating its interaction with the beta and alpha subunits. In Alkaliphilus oremlandii (strain OhILAs) (Clostridium oremlandii (strain OhILAs)), this protein is DNA-directed RNA polymerase subunit omega.